The sequence spans 1388 residues: DNA-directed RNA polymerase subunit beta' (1388 aa).

Positions 65, 67, 80, and 83 each coordinate Zn(2+). 3 residues coordinate Mg(2+): Asp-456, Asp-458, and Asp-460. Residues Cys-812, Cys-887, Cys-894, and Cys-897 each contribute to the Zn(2+) site.

It belongs to the RNA polymerase beta' chain family. In terms of assembly, the RNAP catalytic core consists of 2 alpha, 1 beta, 1 beta' and 1 omega subunit. When a sigma factor is associated with the core the holoenzyme is formed, which can initiate transcription. Mg(2+) serves as cofactor. It depends on Zn(2+) as a cofactor.

The catalysed reaction is RNA(n) + a ribonucleoside 5'-triphosphate = RNA(n+1) + diphosphate. Functionally, DNA-dependent RNA polymerase catalyzes the transcription of DNA into RNA using the four ribonucleoside triphosphates as substrates. In Protochlamydia amoebophila (strain UWE25), this protein is DNA-directed RNA polymerase subunit beta'.